Consider the following 803-residue polypeptide: Phenylalanine--tRNA ligase beta subunit (803 aa).

Positions 40–153 (ASLDRRIVVG…SSWEIGKPFA (114 aa)) constitute a tRNA-binding domain. The region spanning 400-476 (ADLQLLALRP…RLYGYNAIES (77 aa)) is the B5 domain. Mg(2+) is bound by residues Asp-454, Asp-460, Glu-463, and Glu-464. Residues 709–801 (SRFPVVERDI…AESKLGAVIR (93 aa)) form the FDX-ACB domain.

The protein belongs to the phenylalanyl-tRNA synthetase beta subunit family. Type 1 subfamily. As to quaternary structure, tetramer of two alpha and two beta subunits. Mg(2+) is required as a cofactor.

It is found in the cytoplasm. The catalysed reaction is tRNA(Phe) + L-phenylalanine + ATP = L-phenylalanyl-tRNA(Phe) + AMP + diphosphate + H(+). The chain is Phenylalanine--tRNA ligase beta subunit from Chlorobium chlorochromatii (strain CaD3).